The sequence spans 66 residues: Large ribosomal subunit protein bL35 (66 aa).

Residues 20–41 (GKVMSAQRGKRHGMIKRTKKQI) are disordered. Residues 27-41 (RGKRHGMIKRTKKQI) show a composition bias toward basic residues.

The protein belongs to the bacterial ribosomal protein bL35 family.

The polypeptide is Large ribosomal subunit protein bL35 (Rhodopseudomonas palustris (strain BisB5)).